A 356-amino-acid polypeptide reads, in one-letter code: UDP-N-acetylglucosamine--N-acetylmuramyl-(pentapeptide) pyrophosphoryl-undecaprenol N-acetylglucosamine transferase (356 aa).

UDP-N-acetyl-alpha-D-glucosamine contacts are provided by residues 11 to 13 (TGG), Asn122, Ser186, and Gln287.

Belongs to the glycosyltransferase 28 family. MurG subfamily.

It is found in the cell inner membrane. The enzyme catalyses di-trans,octa-cis-undecaprenyl diphospho-N-acetyl-alpha-D-muramoyl-L-alanyl-D-glutamyl-meso-2,6-diaminopimeloyl-D-alanyl-D-alanine + UDP-N-acetyl-alpha-D-glucosamine = di-trans,octa-cis-undecaprenyl diphospho-[N-acetyl-alpha-D-glucosaminyl-(1-&gt;4)]-N-acetyl-alpha-D-muramoyl-L-alanyl-D-glutamyl-meso-2,6-diaminopimeloyl-D-alanyl-D-alanine + UDP + H(+). Its pathway is cell wall biogenesis; peptidoglycan biosynthesis. Functionally, cell wall formation. Catalyzes the transfer of a GlcNAc subunit on undecaprenyl-pyrophosphoryl-MurNAc-pentapeptide (lipid intermediate I) to form undecaprenyl-pyrophosphoryl-MurNAc-(pentapeptide)GlcNAc (lipid intermediate II). This is UDP-N-acetylglucosamine--N-acetylmuramyl-(pentapeptide) pyrophosphoryl-undecaprenol N-acetylglucosamine transferase from Anaplasma marginale (strain St. Maries).